Consider the following 158-residue polypeptide: 6,7-dimethyl-8-ribityllumazine synthase (158 aa).

Residues Phe22, 57–59 (SYE), and 81–83 (TVI) each bind 5-amino-6-(D-ribitylamino)uracil. The active-site Proton donor is His89. Phe114 contacts 5-amino-6-(D-ribitylamino)uracil. Arg128 lines the (2S)-2-hydroxy-3-oxobutyl phosphate pocket.

The protein belongs to the DMRL synthase family. Forms an icosahedral capsid composed of 60 subunits, arranged as a dodecamer of pentamers.

It carries out the reaction (2S)-2-hydroxy-3-oxobutyl phosphate + 5-amino-6-(D-ribitylamino)uracil = 6,7-dimethyl-8-(1-D-ribityl)lumazine + phosphate + 2 H2O + H(+). Its pathway is cofactor biosynthesis; riboflavin biosynthesis; riboflavin from 2-hydroxy-3-oxobutyl phosphate and 5-amino-6-(D-ribitylamino)uracil: step 1/2. Functionally, catalyzes the formation of 6,7-dimethyl-8-ribityllumazine by condensation of 5-amino-6-(D-ribitylamino)uracil with 3,4-dihydroxy-2-butanone 4-phosphate. This is the penultimate step in the biosynthesis of riboflavin. In Blochmanniella pennsylvanica (strain BPEN), this protein is 6,7-dimethyl-8-ribityllumazine synthase.